The following is a 131-amino-acid chain: Olfactory receptor-like protein COR9 (131 aa).

The Cytoplasmic segment spans residues 1–16 (VAICSPLLYSTVMTKR). Residues 17 to 41 (VCMQLVVGSYMGGLLNSLTHTCGLL) form a helical membrane-spanning segment. Residues 42-82 (GLPFCGPNVINHYFCDIPPLLQLACSDTHRNETLLLAFSAV) are Extracellular-facing. Asn72 is a glycosylation site (N-linked (GlcNAc...) asparagine). Residues 83–103 (IALFTLFVITASYMLILSVIL) traverse the membrane as a helical segment. Residues 104–116 (KIQSDDGRKKTFH) lie on the Cytoplasmic side of the membrane. The helical transmembrane segment at 117-131 (TCASHLTAITIFFGS) threads the bilayer.

This sequence belongs to the G-protein coupled receptor 1 family.

It localises to the cell membrane. In terms of biological role, odorant receptor. This chain is Olfactory receptor-like protein COR9 (COR9), found in Gallus gallus (Chicken).